The following is a 161-amino-acid chain: Transcription antitermination protein NusB (161 aa).

Positions 1–22 (MNLSDFKPGEGTEVPEEEKSVS) are disordered.

The protein belongs to the NusB family.

Functionally, involved in transcription antitermination. Required for transcription of ribosomal RNA (rRNA) genes. Binds specifically to the boxA antiterminator sequence of the ribosomal RNA (rrn) operons. This chain is Transcription antitermination protein NusB, found in Hydrogenovibrio crunogenus (strain DSM 25203 / XCL-2) (Thiomicrospira crunogena).